The chain runs to 316 residues: Aspartate carbamoyltransferase catalytic subunit (316 aa).

The carbamoyl phosphate site is built by Arg-56 and Thr-57. L-aspartate is bound at residue Lys-84. Arg-106, His-139, and Gln-142 together coordinate carbamoyl phosphate. Residues Arg-172 and Arg-226 each contribute to the L-aspartate site. Residues Gly-267 and Pro-268 each contribute to the carbamoyl phosphate site.

The protein belongs to the aspartate/ornithine carbamoyltransferase superfamily. ATCase family. In terms of assembly, heterododecamer (2C3:3R2) of six catalytic PyrB chains organized as two trimers (C3), and six regulatory PyrI chains organized as three dimers (R2).

The catalysed reaction is carbamoyl phosphate + L-aspartate = N-carbamoyl-L-aspartate + phosphate + H(+). The protein operates within pyrimidine metabolism; UMP biosynthesis via de novo pathway; (S)-dihydroorotate from bicarbonate: step 2/3. Catalyzes the condensation of carbamoyl phosphate and aspartate to form carbamoyl aspartate and inorganic phosphate, the committed step in the de novo pyrimidine nucleotide biosynthesis pathway. The chain is Aspartate carbamoyltransferase catalytic subunit from Mycobacterium sp. (strain JLS).